An 87-amino-acid polypeptide reads, in one-letter code: uncharacterized protein (87 aa).

Transmembrane regions (helical) follow at residues 8 to 28 and 47 to 67; these read IVVL…IFDL and LAGS…LIGL.

Its subcellular location is the cell membrane. This is an uncharacterized protein from Bacillus subtilis (strain 168).